Reading from the N-terminus, the 130-residue chain is Small ribosomal subunit protein uS9 (130 aa).

The disordered stretch occupies residues 105-130; sequence TRDPRMKERKKYGLKKARRAPQFSKR. The span at 111–130 shows a compositional bias: basic residues; the sequence is KERKKYGLKKARRAPQFSKR.

This sequence belongs to the universal ribosomal protein uS9 family.

This Acetivibrio thermocellus (strain ATCC 27405 / DSM 1237 / JCM 9322 / NBRC 103400 / NCIMB 10682 / NRRL B-4536 / VPI 7372) (Clostridium thermocellum) protein is Small ribosomal subunit protein uS9.